Here is a 299-residue protein sequence, read N- to C-terminus: Centriolar and ciliogenesis-associated protein HYLS1 (299 aa).

Phosphoserine is present on S179.

Belongs to the HYLS1 family.

The protein resides in the cytoplasm. It localises to the cell projection. It is found in the cilium. The protein localises to the cytoskeleton. Its subcellular location is the microtubule organizing center. The protein resides in the centrosome. It localises to the centriole. Its function is as follows. Plays a role in ciliogenesis. This chain is Centriolar and ciliogenesis-associated protein HYLS1, found in Homo sapiens (Human).